Reading from the N-terminus, the 297-residue chain is Phosphatidylglycerol--prolipoprotein diacylglyceryl transferase (297 aa).

3 helical membrane passes run 17–37 (LAVR…IVVG), 59–79 (MLFY…VLFY), and 97–117 (GGMS…LFAW). Arg142 contacts a 1,2-diacyl-sn-glycero-3-phospho-(1'-sn-glycerol). The next 2 helical transmembrane spans lie at 230 to 250 (MGAV…TVEF) and 257 to 277 (FLGL…PMIV).

This sequence belongs to the Lgt family.

It is found in the cell inner membrane. It catalyses the reaction L-cysteinyl-[prolipoprotein] + a 1,2-diacyl-sn-glycero-3-phospho-(1'-sn-glycerol) = an S-1,2-diacyl-sn-glyceryl-L-cysteinyl-[prolipoprotein] + sn-glycerol 1-phosphate + H(+). Its pathway is protein modification; lipoprotein biosynthesis (diacylglyceryl transfer). Catalyzes the transfer of the diacylglyceryl group from phosphatidylglycerol to the sulfhydryl group of the N-terminal cysteine of a prolipoprotein, the first step in the formation of mature lipoproteins. The protein is Phosphatidylglycerol--prolipoprotein diacylglyceryl transferase of Burkholderia multivorans (strain ATCC 17616 / 249).